Reading from the N-terminus, the 237-residue chain is Uridylate kinase (237 aa).

12–15 serves as a coordination point for ATP; that stretch reads KLSG. Positions 20 to 25 are involved in allosteric activation by GTP; the sequence is GENGFG. G54 contacts UMP. Residues G55 and R59 each coordinate ATP. UMP is bound by residues D72 and 133-140; that span reads TGNPYFST. Positions 166 and 169 each coordinate ATP.

It belongs to the UMP kinase family. Homohexamer.

It localises to the cytoplasm. It catalyses the reaction UMP + ATP = UDP + ADP. It participates in pyrimidine metabolism; CTP biosynthesis via de novo pathway; UDP from UMP (UMPK route): step 1/1. Allosterically activated by GTP. Inhibited by UTP. Its function is as follows. Catalyzes the reversible phosphorylation of UMP to UDP. The sequence is that of Uridylate kinase from Clostridium perfringens (strain SM101 / Type A).